The following is a 402-amino-acid chain: Serine/threonine-protein kinase US3 homolog (402 aa).

2 disordered regions span residues 1–21 (MSST…KVHD) and 46–88 (FPDS…SPET). The Protein kinase domain occupies 102–386 (YNIVSSLPPG…AQDILMLPLF (285 aa)). ATP-binding positions include 110-118 (PGSEGYIYV) and lysine 127. Aspartate 218 functions as the Proton acceptor in the catalytic mechanism.

The protein belongs to the protein kinase superfamily. Ser/Thr protein kinase family. In terms of processing, phosphorylated by UL13 homolog; this phosphorylation regulates subsequent phosphorylation of UL31 and UL34 homologs by US3. Autophosphorylated.

It is found in the host cytoplasm. It localises to the host nucleus. The catalysed reaction is L-seryl-[protein] + ATP = O-phospho-L-seryl-[protein] + ADP + H(+). The enzyme catalyses L-threonyl-[protein] + ATP = O-phospho-L-threonyl-[protein] + ADP + H(+). Its function is as follows. Multifunctional serine/threonine kinase that plays a role in several processes including egress of virus particles from the nucleus, modulation of the actin cytoskeleton and inhibition of apoptosis. Phosphorylates UL31 and UL34 homologs, two critical regulators of capsid budding from nucleus to endoplasmic reticulum, thereby facilitating virion egress. Modulates and redistributes host components of the nuclear envelope, including LMNA, emerin/EMD and the nuclear matrix protein MATR3. Phosphorylates envelope glycoprotein B (gB), probably to direct it to the cell surface. Promotes virus intracellular spread by restructuring host cell cytoskeleton. Blocks host apoptosis to extend cell survival and allow efficient viral replication. Promotes viral gene expression by phosphorylating host HDAC2 to reduce viral genome silencing. This is Serine/threonine-protein kinase US3 homolog (US1206) from Gallid herpesvirus 2 (strain GA) (GaHV-2).